The primary structure comprises 675 residues: Genome polyprotein (675 aa).

The RdRp catalytic domain maps to 92-216 (WVYCDADGSQ…AIHPDHEHVL (125 aa)). The segment covering 397–424 (GLNEKLKEKENQKEKEKEKQKEKEKDGA) has biased composition (basic and acidic residues). The disordered stretch occupies residues 397-447 (GLNEKLKEKENQKEKEKEKQKEKEKDGASDGNDVSTSTKTGERDRDVNVGT).

Belongs to the potyviridae genome polyprotein family. In terms of processing, genome polyprotein of potyviruses undergoes post-translational proteolytic processing by the main proteinase NIa-pro resulting in the production of at least ten individual proteins. The P1 proteinase and the HC-pro cleave only their respective C-termini autocatalytically. 6K1 is essential for proper proteolytic separation of P3 from CI.

It is found in the virion. The enzyme catalyses RNA(n) + a ribonucleoside 5'-triphosphate = RNA(n+1) + diphosphate. In terms of biological role, an RNA-dependent RNA polymerase that plays an essential role in the virus replication. Functionally, involved in aphid transmission, cell-to-cell and systemis movement, encapsidation of the viral RNA and in the regulation of viral RNA amplification. The chain is Genome polyprotein from Papaya ringspot virus (strain P / mutant HA 5-1).